A 63-amino-acid polypeptide reads, in one-letter code: Large ribosomal subunit protein uL30 (63 aa).

It belongs to the universal ribosomal protein uL30 family. Part of the 50S ribosomal subunit.

In Rickettsia africae (strain ESF-5), this protein is Large ribosomal subunit protein uL30.